The sequence spans 92 residues: Phospholemman (92 aa).

A signal peptide spans 1–20 (MASLSHILVLCVGLLAMVNA). The Extracellular portion of the chain corresponds to 21-35 (EAPQEHDPFTYDYQS). A helical membrane pass occupies residues 36–56 (LRIGGLIIAGILFILGILIVL). At 57–92 (SRRCRCKFNQQQRTGEPDEEEGTFRSSIRRLSTRRR) the chain is on the cytoplasmic side. Cys-60 is lipidated: S-palmitoyl cysteine. The residue at position 62 (Cys-62) is an S-glutathionyl cysteine; alternate. Cys-62 is lipidated: S-palmitoyl cysteine; alternate. Residues 65–92 (NQQQRTGEPDEEEGTFRSSIRRLSTRRR) are disordered. Thr-79 bears the Phosphothreonine mark. Phosphoserine is present on Ser-82. Phosphoserine; by PKA and PKC is present on Ser-83. Residues 83-92 (SIRRLSTRRR) show a composition bias toward basic residues. Ser-88 is subject to Phosphoserine; by PKA. Thr-89 bears the Phosphothreonine; by PKC mark.

Belongs to the FXYD family. In terms of assembly, homotetramer. Monomer. Regulatory subunit of the sodium/potassium-transporting ATPase (NKA) which is composed of a catalytic alpha subunit, an auxiliary non-catalytic beta subunit and an additional regulatory subunit. The monomeric form associates with NKA while the oligomeric form does not. Interacts with the catalytic alpha-1 subunit ATP1A1. Also interacts with the catalytic alpha-2 and alpha-3 subunits ATP1A2 and ATP1A3. Very little interaction with ATP1A1, ATP1A2 or ATP1A3 when phosphorylated at Ser-83. Interacts with the non-catalytic beta-1 subunit ATP1B1. Oxidative stress decreases interaction with ATP1A1 but increases interaction with ATP1B1. In terms of processing, major plasma membrane substrate for cAMP-dependent protein kinase (PKA) and protein kinase C (PKC) in several different tissues. Phosphorylated in response to insulin and adrenergic stimulation. Phosphorylation at Ser-88 stimulates sodium/potassium-transporting ATPase activity while the unphosphorylated form inhibits sodium/potassium-transporting ATPase activity. Phosphorylation increases tetramerization, decreases binding to ATP1A1 and reduces inhibition of ATP1A1 activity. Phosphorylation at Ser-83 leads to greatly reduced interaction with ATP1A1, ATP1A2 and ATP1A3. May be phosphorylated by DMPK. Palmitoylation increases half-life and stability and is enhanced upon phosphorylation at Ser-88 by PKA. In the brain, detected in cerebellum and choroid plexus (at protein level).

It is found in the cell membrane. Its subcellular location is the sarcolemma. The protein resides in the apical cell membrane. The protein localises to the membrane. It localises to the caveola. It is found in the T-tubule. In terms of biological role, associates with and regulates the activity of the sodium/potassium-transporting ATPase (NKA) which transports Na(+) out of the cell and K(+) into the cell. Inhibits NKA activity in its unphosphorylated state and stimulates activity when phosphorylated. Reduces glutathionylation of the NKA beta-1 subunit ATP1B1, thus reversing glutathionylation-mediated inhibition of ATP1B1. Contributes to female sexual development by maintaining the excitability of neurons which secrete gonadotropin-releasing hormone. The sequence is that of Phospholemman from Bos taurus (Bovine).